A 147-amino-acid polypeptide reads, in one-letter code: Microsomal glutathione S-transferase 2 (147 aa).

Transmembrane regions (helical) follow at residues 6 to 26 (SLLA…AWRV), 62 to 82 (VFIV…AACL), and 107 to 127 (GFRL…LGVA).

As to quaternary structure, homotrimer.

The protein resides in the endoplasmic reticulum membrane. Its subcellular location is the microsome membrane. It catalyses the reaction RX + glutathione = an S-substituted glutathione + a halide anion + H(+). It carries out the reaction 1-chloro-2,4-dinitrobenzene + glutathione = 2,4-dinitrophenyl-S-glutathione + chloride + H(+). The catalysed reaction is leukotriene C4 = leukotriene A4 + glutathione. The enzyme catalyses (5S)-hydroperoxy-(6E,8Z,11Z,14Z)-eicosatetraenoate + 2 glutathione = (5S)-hydroxy-(6E,8Z,11Z,14Z)-eicosatetraenoate + glutathione disulfide + H2O. Each monomer binds on GSH molecule but only one subunit is catalytically active. Its function is as follows. Catalyzes several different glutathione-dependent reactions. Catalyzes the glutathione-dependent reduction of lipid hydroperoxides, such as 5-HPETE. Has glutathione transferase activity, toward xenobiotic electrophiles, such as 1-chloro-2, 4-dinitrobenzene (CDNB). Also catalyzes the conjugation of leukotriene A4 with reduced glutathione to form leukotriene C4 (LTC4). Involved in oxidative DNA damage induced by ER stress and anticancer agents by activating LTC4 biosynthetic machinery in nonimmune cells. The sequence is that of Microsomal glutathione S-transferase 2 from Mus musculus (Mouse).